A 299-amino-acid polypeptide reads, in one-letter code: Formylglycine-generating enzyme (299 aa).

Positions 263 and 268 each coordinate Cu cation.

The protein belongs to the sulfatase-modifying factor family. Cu cation serves as cofactor.

It catalyses the reaction L-cysteinyl-[sulfatase] + 2 a thiol + O2 = an organic disulfide + 3-oxo-L-alanyl-[sulfatase] + hydrogen sulfide + H2O + H(+). It functions in the pathway protein modification; sulfatase oxidation. Oxidase that catalyzes the conversion of cysteine to 3-oxoalanine on target proteins. 3-oxoalanine modification, which is also named formylglycine (fGly), occurs in the maturation of arylsulfatases and some alkaline phosphatases that use the hydrated form of 3-oxoalanine as a catalytic nucleophile. This Mycobacterium tuberculosis (strain ATCC 25618 / H37Rv) protein is Formylglycine-generating enzyme.